We begin with the raw amino-acid sequence, 173 residues long: NADH-ubiquinone oxidoreductase chain 6 (173 aa).

5 helical membrane passes run 1-21, 25-45, 53-73, 82-102, and 142-162; these read MTYV…AVAS, PYFG…VLIW, LVLF…SAAL, LGSW…FGIL, and GVLL…LELV.

It belongs to the complex I subunit 6 family.

Its subcellular location is the mitochondrion membrane. It catalyses the reaction a ubiquinone + NADH + 5 H(+)(in) = a ubiquinol + NAD(+) + 4 H(+)(out). Functionally, core subunit of the mitochondrial membrane respiratory chain NADH dehydrogenase (Complex I) that is believed to belong to the minimal assembly required for catalysis. Complex I functions in the transfer of electrons from NADH to the respiratory chain. The immediate electron acceptor for the enzyme is believed to be ubiquinone. This is NADH-ubiquinone oxidoreductase chain 6 (MT-ND6) from Tetraodon nigroviridis (Spotted green pufferfish).